Reading from the N-terminus, the 258-residue chain is Alpha- and beta-fibrinogenase stejnefibrase-1 (258 aa).

Residues 1–18 (MELIRVLANLLILQLSYA) form the signal peptide. The propeptide occupies 19–24 (QKSSEL). The Peptidase S1 domain occupies 25-249 (IIGGDECNID…HLDWIQNIIA (225 aa)). Intrachain disulfides connect C31/C163, C50/C66, C98/C256, C142/C210, C174/C189, and C200/C225. The Charge relay system role is filled by H65. N-linked (GlcNAc...) asparagine glycosylation is present at N103. The active-site Charge relay system is the D110. N-linked (GlcNAc...) asparagine glycans are attached at residues N121, N122, N154, and N170. S204 (charge relay system) is an active-site residue.

It belongs to the peptidase S1 family. Snake venom subfamily. In terms of assembly, monomer. As to expression, expressed by the venom gland.

The protein resides in the secreted. With respect to regulation, its activity is inhibited by PMSF and p-nitrophenyl-p-guanidinobenzoate (NPGB). Its function is as follows. Snake venom serine protease. Degrades concomitantly alpha- (FGA) and beta-chains of fibrinogen (FGB). The protein is Alpha- and beta-fibrinogenase stejnefibrase-1 of Trimeresurus stejnegeri (Chinese green tree viper).